A 410-amino-acid polypeptide reads, in one-letter code: Diguanylate cyclase DgcM (410 aa).

2 consecutive PAS domains span residues 3–70 (THNF…NQHD) and 129–198 (GFYA…HLPG). In terms of domain architecture, PAC spans 199–251 (GHKPLNFVHKLADGSTRHVQTYAGPIEIYGDKLMLCIVHDITEQKRLEEQLEH). Residues 283 to 410 (QDYSLLLIDT…NDGRNRVLAA (128 aa)) enclose the GGDEF domain. Position 291 (D291) interacts with Mg(2+). Substrate contacts are provided by N299, H304, and D308. E334 is a Mg(2+) binding site. E334 functions as the Proton acceptor in the catalytic mechanism.

Forms homodimers and homotetramers. Interacts with PdeR and MlrA. Mg(2+) serves as cofactor.

It carries out the reaction 2 GTP = 3',3'-c-di-GMP + 2 diphosphate. Its pathway is purine metabolism; 3',5'-cyclic di-GMP biosynthesis. Activity is inhibited by the phosphodiesterase PdeR. Inhibition is relieved by high cellular c-di-GMP levels. Its function is as follows. Part of a signaling cascade that regulates curli biosynthesis. The cascade is composed of two cyclic-di-GMP (c-di-GMP) control modules, in which c-di-GMP controlled by the DgcE/PdeH pair (module I) regulates the activity of the DgcM/PdeR pair (module II), which in turn regulates activity of the transcription factor MlrA and expression of the master biofilm regulator csgD. DgcM stimulates activity of MlrA by direct interaction, leading to the transcription of csgD. It also catalyzes the synthesis of c-di-GMP via the condensation of 2 GTP molecules, which contributes to the c-di-GMP pool generated by module I in a positive feedback loop. Production of c-di-GMP contributes to but is not essential for MlrA activation. This is Diguanylate cyclase DgcM from Escherichia coli (strain K12).